The primary structure comprises 243 residues: Urease accessory protein UreF (243 aa).

Belongs to the UreF family. In terms of assembly, ureD, UreF and UreG form a complex that acts as a GTP-hydrolysis-dependent molecular chaperone, activating the urease apoprotein by helping to assemble the nickel containing metallocenter of UreC. The UreE protein probably delivers the nickel.

Its subcellular location is the cytoplasm. Functionally, required for maturation of urease via the functional incorporation of the urease nickel metallocenter. This chain is Urease accessory protein UreF, found in Rhodopseudomonas palustris (strain BisB5).